Consider the following 193-residue polypeptide: Putative 3-methyladenine DNA glycosylase (193 aa).

It belongs to the DNA glycosylase MPG family.

The chain is Putative 3-methyladenine DNA glycosylase from Francisella tularensis subsp. tularensis (strain FSC 198).